The chain runs to 329 residues: Porphobilinogen deaminase (329 aa).

The residue at position 250 (Cys250) is an S-(dipyrrolylmethanemethyl)cysteine.

This sequence belongs to the HMBS family. As to quaternary structure, monomer. Requires dipyrromethane as cofactor.

The catalysed reaction is 4 porphobilinogen + H2O = hydroxymethylbilane + 4 NH4(+). It participates in porphyrin-containing compound metabolism; protoporphyrin-IX biosynthesis; coproporphyrinogen-III from 5-aminolevulinate: step 2/4. In terms of biological role, tetrapolymerization of the monopyrrole PBG into the hydroxymethylbilane pre-uroporphyrinogen in several discrete steps. The sequence is that of Porphobilinogen deaminase from Burkholderia mallei (strain NCTC 10247).